The primary structure comprises 401 residues: Tyrosine--tRNA ligase (401 aa).

Residues 42-51 carry the 'HIGH' region motif; the sequence is PTAPDLHLGH. Positions 226–230 match the 'KMSKS' region motif; the sequence is KMSKS. Lysine 229 contributes to the ATP binding site. In terms of domain architecture, S4 RNA-binding spans 336 to 397; sequence IALAQLLKQI…GKRRIAKLSI (62 aa).

The protein belongs to the class-I aminoacyl-tRNA synthetase family. TyrS type 2 subfamily. Homodimer.

The protein resides in the cytoplasm. It carries out the reaction tRNA(Tyr) + L-tyrosine + ATP = L-tyrosyl-tRNA(Tyr) + AMP + diphosphate + H(+). Its function is as follows. Catalyzes the attachment of tyrosine to tRNA(Tyr) in a two-step reaction: tyrosine is first activated by ATP to form Tyr-AMP and then transferred to the acceptor end of tRNA(Tyr). The polypeptide is Tyrosine--tRNA ligase (Legionella pneumophila (strain Paris)).